The chain runs to 429 residues: Maltoporin 2 (429 aa).

The signal sequence occupies residues 1-25; it reads MMITLRKLPLAVAVAAGVMSAQALA. The span at 397 to 412 shows a compositional bias: polar residues; that stretch reads GLQTKDSSGSGAFTSS. Positions 397–416 are disordered; the sequence is GLQTKDSSGSGAFTSSRGDD.

Belongs to the porin LamB (TC 1.B.3) family. In terms of assembly, homotrimer formed of three 18-stranded antiparallel beta-barrels, containing three independent channels.

The protein localises to the cell outer membrane. It carries out the reaction beta-maltose(in) = beta-maltose(out). In terms of biological role, involved in the transport of maltose and maltodextrins. This Klebsiella pneumoniae subsp. pneumoniae (strain ATCC 700721 / MGH 78578) protein is Maltoporin 2.